Consider the following 422-residue polypeptide: Histidine--tRNA ligase (422 aa).

It belongs to the class-II aminoacyl-tRNA synthetase family. In terms of assembly, homodimer.

The protein resides in the cytoplasm. The enzyme catalyses tRNA(His) + L-histidine + ATP = L-histidyl-tRNA(His) + AMP + diphosphate + H(+). The protein is Histidine--tRNA ligase of Vibrio atlanticus (strain LGP32) (Vibrio splendidus (strain Mel32)).